A 505-amino-acid chain; its full sequence is ATP synthase subunit alpha, chloroplastic (505 aa).

170 to 177 contacts ATP; the sequence is GDRQTGKT.

The protein belongs to the ATPase alpha/beta chains family. In terms of assembly, F-type ATPases have 2 components, CF(1) - the catalytic core - and CF(0) - the membrane proton channel. CF(1) has five subunits: alpha(3), beta(3), gamma(1), delta(1), epsilon(1). CF(0) has four main subunits: a, b, b' and c.

It localises to the plastid. Its subcellular location is the chloroplast thylakoid membrane. It catalyses the reaction ATP + H2O + 4 H(+)(in) = ADP + phosphate + 5 H(+)(out). Functionally, produces ATP from ADP in the presence of a proton gradient across the membrane. The alpha chain is a regulatory subunit. In Zygnema circumcarinatum (Green alga), this protein is ATP synthase subunit alpha, chloroplastic.